Consider the following 154-residue polypeptide: MHKKSSTLIRKREISDVTKESKVVLKSDQQWREQLSEQEYHVCREQGTEPPFSGKLLHNKDSGEYACTCCHAPLFSSVNKYDSGCGWPSFDAPINETAVLYLDDFSHGMKRVEIRCARCDSHLGHVFPDGPKTTGERFCVNSVSLIFNKIETNE.

The region spanning 28–150 is the MsrB domain; the sequence is DQQWREQLSE…NSVSLIFNKI (123 aa). Zn(2+)-binding residues include Cys67, Cys70, Cys116, and Cys119. The active-site Nucleophile is the Cys139.

It belongs to the MsrB Met sulfoxide reductase family. It depends on Zn(2+) as a cofactor.

The enzyme catalyses L-methionyl-[protein] + [thioredoxin]-disulfide + H2O = L-methionyl-(R)-S-oxide-[protein] + [thioredoxin]-dithiol. This chain is Peptide methionine sulfoxide reductase MsrB, found in Vibrio vulnificus (strain CMCP6).